The chain runs to 433 residues: PBSX phage terminase large subunit (433 aa).

It to B.subtilis YqaT and phage SPP1 terminase large subunit. Dimer of a small and a large subunit.

Functions as a terminase. This chain is PBSX phage terminase large subunit (xtmB), found in Bacillus subtilis (strain 168).